Reading from the N-terminus, the 941-residue chain is Isoleucine--tRNA ligase (941 aa).

The short motif at 69–79 (PYANGDIHIGH) is the 'HIGH' region element. Residue E589 participates in L-isoleucyl-5'-AMP binding. The short motif at 630–634 (KMSKS) is the 'KMSKS' region element. Position 633 (K633) interacts with ATP. Residues C915, C918, C932, and C935 each contribute to the Zn(2+) site.

This sequence belongs to the class-I aminoacyl-tRNA synthetase family. IleS type 1 subfamily. As to quaternary structure, monomer. Zn(2+) is required as a cofactor.

The protein resides in the cytoplasm. The catalysed reaction is tRNA(Ile) + L-isoleucine + ATP = L-isoleucyl-tRNA(Ile) + AMP + diphosphate. In terms of biological role, catalyzes the attachment of isoleucine to tRNA(Ile). As IleRS can inadvertently accommodate and process structurally similar amino acids such as valine, to avoid such errors it has two additional distinct tRNA(Ile)-dependent editing activities. One activity is designated as 'pretransfer' editing and involves the hydrolysis of activated Val-AMP. The other activity is designated 'posttransfer' editing and involves deacylation of mischarged Val-tRNA(Ile). The protein is Isoleucine--tRNA ligase of Zymomonas mobilis subsp. mobilis (strain ATCC 31821 / ZM4 / CP4).